The primary structure comprises 427 residues: Interferon regulatory factor 3 (427 aa).

Thr-3 is subject to Phosphothreonine. The IRF tryptophan pentad repeat DNA-binding region spans 5 to 111 (KPRILPWLVS…DPHKIYEFVN (107 aa)). Ser-14 carries the post-translational modification Phosphoserine. Thr-75 is subject to Phosphothreonine. Residues 91-107 (RLAEDRSKDPHDPHKIY) show a composition bias toward basic and acidic residues. The tract at residues 91 to 136 (RLAEDRSKDPHDPHKIYEFVNSGVGDFSQPDTSPDTNGGGSTSDTQ) is disordered. 2 positions are modified to phosphoserine: Ser-97 and Ser-123. Positions 139-149 (ILDELLGNMVL) match the Nuclear export signal motif. Positions 141 to 427 (DELLGNMVLA…GMDFQGPGES (287 aa)) are mediates interaction with ZDHHC11. Ser-175 carries the post-translational modification (Microbial infection) Phosphoserine. A Phosphothreonine modification is found at Thr-180. Ser-188 bears the Phosphoserine mark. Lys-193 is covalently cross-linked (Glycyl lysine isopeptide (Lys-Gly) (interchain with G-Cter in ISG15)). An interaction with HERC5 region spans residues 200-360 (EEWEFEVTAF…SWPQDQPWTK (161 aa)). Phosphothreonine is present on residues Thr-237, Thr-244, and Thr-253. Residues Cys-267 and Cys-289 are joined by a disulfide bond. Glycyl lysine isopeptide (Lys-Gly) (interchain with G-Cter in ISG15) cross-links involve residues Lys-360 and Lys-366. An N6-acetyllysine modification is found at Lys-366. The residue at position 385 (Ser-385) is a Phosphoserine. A Diphosphoserine modification is found at Ser-386. At Ser-386 the chain carries Phosphoserine; by TBK1. Ser-396 is modified (phosphoserine; by IKKE and TBK1). A Phosphoserine modification is found at Ser-398. The residue at position 404 (Thr-404) is a Phosphothreonine. Ser-427 is subject to Phosphoserine.

Belongs to the IRF family. As to quaternary structure, monomer. Homodimer; phosphorylation-induced. Interacts (when phosphorylated) with CREBBP. Interacts with MAVS (via phosphorylated pLxIS motif). Interacts with TICAM1 (via phosphorylated pLxIS motif). Interacts with STING1 (via phosphorylated pLxIS motif). Interacts with IKBKE and TBK1. Interacts with TICAM2. Interacts with RBCK1. Interacts with HERC5. Interacts with DDX3X (phosphorylated at 'Ser-102'); the interaction allows the phosphorylation and activation of IRF3 by IKBKE. Interacts with TRIM21 and ULK1, in the presence of TRIM21; this interaction leads to IRF3 degradation by autophagy. Interacts with RIOK3; RIOK3 probably mediates the interaction of TBK1 with IRF3. Interacts with ILRUN; the interaction inhibits IRF3 binding to its DNA consensus sequence. Interacts with LYAR; this interaction impairs IRF3 DNA-binding activity. Interacts with TRAF3. Interacts with ZDHHC11; ZDHHC11 recruits IRF3 to STING1 upon DNA virus infection and thereby promotes IRF3 activation. Interacts with HSP90AA1; the interaction mediates IRF3 association with TOMM70. Interacts with BCL2; the interaction decreases upon Sendai virus infection. Interacts with BAX; the interaction is direct, increases upon Sendai virus infection and mediates the formation of the apoptosis complex TOMM70:HSP90AA1:IRF3:BAX. Interacts with DDX56. Interacts with NBR1. (Microbial infection) Interacts with rotavirus A NSP1 (via pLxIS motif); this interaction leads to the proteasome-dependent degradation of IRF3. In terms of assembly, (Microbial infection) Interacts with herpes virus 8/HHV-8 protein VIRF1. As to quaternary structure, (Microbial infection) Interacts with Seneca Valley virus protease 3C; this interaction is involved in the suppression of IRF3 expression and phosphorylation by the virus. (Microbial infection) Interacts with herpes virus 2/HHV-2 protein ICP27; this interaction inhibits IRF3 phosphorylation and nuclear translocation. In terms of assembly, (Microbial infection) Interacts with human cytomegalovirus protein UL44; this interaction prevents IRF3 binding to its promoters. As to quaternary structure, (Microbial infection) Interacts with the two fragments of MERS-COV protein N produced by CASP6 through proteolytic cleavage; both interactions inhibit IRF3 nuclear translocation after activation and IFN signaling. Constitutively phosphorylated on many Ser/Thr residues. Activated following phosphorylation by TBK1 and IKBKE. Innate adapter proteins, such as MAVS, STING1 or TICAM1, are first activated by viral RNA, cytosolic DNA, and bacterial lipopolysaccharide (LPS), respectively, leading to activation of the kinases TBK1 and IKBKE. These kinases then phosphorylate the adapter proteins on the pLxIS motif, leading to recruitment of IRF3, thereby licensing IRF3 for phosphorylation by TBK1. Phosphorylation at Ser-386 is followed by pyrophosphorylation at the same residue, promoting phosphorylation at Ser-396. Phosphorylated IRF3 dissociates from the adapter proteins, dimerizes, and then enters the nucleus to induce IFNs. In terms of processing, pyrophosphorylated by UAP1 following phosphorylation at Ser-386 by TBK1. Pyrophosphorylation promotes subsequent phosphorylation at Ser-396, leading to homodimerization of IRF3. Post-translationally, acetylation at Lys-366 by KAT8 inhibits recruimtent to promoters and transcription factor activity. Acetylation by KAT8 is promoted by phosphorylation at Ser-396. Ubiquitinated; ubiquitination involves RBCK1 leading to proteasomal degradation. Polyubiquitinated; ubiquitination involves TRIM21 leading to proteasomal degradation. Ubiquitinated by UBE3C, leading to its degradation. Deubiquitinated by USP5 on both 'Lys-48'-linked unanchored and 'Lys-63'-linked anchored polyubiquitin, leading to inhibition of anti-RNA viral innate immunity. In terms of processing, ISGylated by HERC5 resulting in sustained IRF3 activation and in the inhibition of IRF3 ubiquitination by disrupting PIN1 binding. The phosphorylation state of IRF3 does not alter ISGylation. Post-translationally, proteolytically cleaved by apoptotic caspases during apoptosis, leading to its inactivation. Cleavage by CASP3 during virus-induced apoptosis inactivates it, preventing cytokine overproduction. (Microbial infection) ISGylated. ISGylation is cleaved and removed by SARS-COV-2 nsp3 which attenuates type I interferon responses. In terms of processing, (Microbial infection) Phosphorylation and subsequent activation of IRF3 is inhibited by vaccinia virus protein E3. Post-translationally, (Microbial infection) Phosphorylated by herpes simplex virus 1/HHV-1 US3 at Ser-175 to prevent IRF3 activation. As to expression, expressed constitutively in a variety of tissues.

The protein localises to the cytoplasm. It localises to the nucleus. The protein resides in the mitochondrion. In the absence of viral infection, maintained as a monomer in an autoinhibited state. Phosphorylation by TBK1 and IKBKE disrupts this autoinhibition leading to the liberation of the DNA-binding and dimerization activities and its nuclear localization where it can activate type I IFN and ISG genes. Phosphorylation and activation follow the following steps: innate adapter proteins, such as MAVS, STING1 or TICAM1, are first activated by viral RNA, cytosolic DNA and bacterial lipopolysaccharide (LPS), respectively, leading to activation of the kinases TBK1 and IKBKE. These kinases then phosphorylate the adapter proteins on their pLxIS motif, leading to recruitment of IRF3, thereby licensing IRF3 for phosphorylation by TBK1. Phosphorylated IRF3 dissociates from the adapter proteins, dimerizes, and then enters the nucleus to induce IFNs. With respect to regulation, (Microbial infection) Activated upon coronavirus SARS-CoV-2 infection. Its function is as follows. Key transcriptional regulator of type I interferon (IFN)-dependent immune responses which plays a critical role in the innate immune response against DNA and RNA viruses. Regulates the transcription of type I IFN genes (IFN-alpha and IFN-beta) and IFN-stimulated genes (ISG) by binding to an interferon-stimulated response element (ISRE) in their promoters. Acts as a more potent activator of the IFN-beta (IFNB) gene than the IFN-alpha (IFNA) gene and plays a critical role in both the early and late phases of the IFNA/B gene induction. Found in an inactive form in the cytoplasm of uninfected cells and following viral infection, double-stranded RNA (dsRNA), or toll-like receptor (TLR) signaling, is phosphorylated by IKBKE and TBK1 kinases. This induces a conformational change, leading to its dimerization and nuclear localization and association with CREB binding protein (CREBBP) to form dsRNA-activated factor 1 (DRAF1), a complex which activates the transcription of the type I IFN and ISG genes. Can activate distinct gene expression programs in macrophages and can induce significant apoptosis in primary macrophages. In response to Sendai virus infection, is recruited by TOMM70:HSP90AA1 to mitochondrion and forms an apoptosis complex TOMM70:HSP90AA1:IRF3:BAX inducing apoptosis. Key transcription factor regulating the IFN response during SARS-CoV-2 infection. This Homo sapiens (Human) protein is Interferon regulatory factor 3.